Reading from the N-terminus, the 249-residue chain is Putative [LysW]-aminoadipate/[LysW]-glutamate kinase (249 aa).

Residues R64 and N166 each contribute to the substrate site.

Belongs to the acetylglutamate kinase family. LysZ subfamily.

It is found in the cytoplasm. It catalyses the reaction [amino-group carrier protein]-C-terminal-N-(1,4-dicarboxybutan-1-yl)-L-glutamine + ATP = [amino-group carrier protein]-C-terminal-N-(1-carboxy-5-phosphooxy-5-oxopentan-1-yl)-L-glutamine + ADP. It carries out the reaction [amino-group carrier protein]-C-terminal-gamma-(L-glutamyl)-L-glutamate + ATP = [amino-group carrier protein]-C-terminal-gamma-(5-phospho-L-glutamyl)-L-glutamate + ADP. It functions in the pathway amino-acid biosynthesis; L-lysine biosynthesis via AAA pathway; L-lysine from L-alpha-aminoadipate (Thermus route): step 2/5. The protein operates within amino-acid biosynthesis; L-arginine biosynthesis. Its function is as follows. Involved in both the arginine and lysine biosynthetic pathways. Phosphorylates the LysW-bound precursors glutamate (for arginine biosynthesis), respectively alpha-aminoadipate (for lysine biosynthesis). This chain is Putative [LysW]-aminoadipate/[LysW]-glutamate kinase, found in Pyrococcus horikoshii (strain ATCC 700860 / DSM 12428 / JCM 9974 / NBRC 100139 / OT-3).